The chain runs to 325 residues: tRNA U34 carboxymethyltransferase (325 aa).

Carboxy-S-adenosyl-L-methionine contacts are provided by residues Lys91, Trp105, Lys110, Gly130, 152-154 (DPS), Met196, Tyr200, and Arg315.

The protein belongs to the class I-like SAM-binding methyltransferase superfamily. CmoB family. As to quaternary structure, homotetramer.

It carries out the reaction carboxy-S-adenosyl-L-methionine + 5-hydroxyuridine(34) in tRNA = 5-carboxymethoxyuridine(34) in tRNA + S-adenosyl-L-homocysteine + H(+). Its function is as follows. Catalyzes carboxymethyl transfer from carboxy-S-adenosyl-L-methionine (Cx-SAM) to 5-hydroxyuridine (ho5U) to form 5-carboxymethoxyuridine (cmo5U) at position 34 in tRNAs. This is tRNA U34 carboxymethyltransferase from Aeromonas hydrophila subsp. hydrophila (strain ATCC 7966 / DSM 30187 / BCRC 13018 / CCUG 14551 / JCM 1027 / KCTC 2358 / NCIMB 9240 / NCTC 8049).